Consider the following 101-residue polypeptide: uncharacterized protein (101 aa).

This is an uncharacterized protein from Encephalitozoon cuniculi (strain GB-M1) (Microsporidian parasite).